A 1041-amino-acid chain; its full sequence is Collagen alpha-2(I) chain (1041 aa).

Residues 1–1041 (SGGFDFSFLP…FGYEGDFYRA (1041 aa)) are disordered. A 4-hydroxyproline mark is found at Pro10, Pro13, Pro39, and Pro45. Low complexity-rich tracts occupy residues 25–45 (LGPG…SGAP) and 55–76 (EPGE…PPGK). The span at 77–91 (AGEDGHPGKPGRPGE) shows a compositional bias: basic and acidic residues. The residue at position 113 (Lys113) is a 5-hydroxylysine; alternate. Lys113 carries O-linked (Gal...) hydroxylysine; alternate glycosylation. 2 stretches are compositionally biased toward low complexity: residues 174–189 (SVGP…SAGP) and 235–256 (PGAN…AGAP). Over residues 290-299 (GESGGKGEPG) the composition is skewed to gly residues. Residues 300–310 (SAGPQGPPGSS) show a composition bias toward low complexity. The segment covering 332–341 (GLRGGPGSRG) has biased composition (gly residues). The span at 354-370 (PAGARGASGPAGVRGPS) shows a compositional bias: low complexity. Pro376 and Pro379 each carry 4-hydroxyproline. Residues 405–424 (LPGIDGRPGPIGPAGARGEA) are compositionally biased toward low complexity. The segment covering 466 to 475 (GVQGGKGEQG) has biased composition (gly residues). Low complexity-rich tracts occupy residues 522–539 (SGES…SRGP) and 551–561 (EPGVVGAPGTA). Over residues 562–571 (GPAGSGGLPG) the composition is skewed to gly residues. 2 stretches are compositionally biased toward low complexity: residues 594–638 (VGTT…PRGS) and 645–665 (VGPA…QPGA). The segment covering 666-675 (KGERGTKGPK) has biased composition (basic and acidic residues). Low complexity predominate over residues 683–693 (PTGPVGSAGPA). Positions 703 to 712 (GSRGDGGPPG) are enriched in gly residues. The segment covering 714-723 (TGFPGAAGRT) has biased composition (low complexity). Residues 754 to 768 (GPVGRGETGAGGPPG) are compositionally biased toward gly residues. Composition is skewed to low complexity over residues 769–803 (FTGE…LGLP) and 811–821 (LPGVAGAVGEP). Residues 822–840 (GPLGIGPPGARGPSGGVPG) are compositionally biased toward gly residues. 2 stretches are compositionally biased toward low complexity: residues 874–887 (YAGN…AGAP) and 903–918 (EPGP…ALGP). The span at 928–939 (RGDKGEAGDKGP) shows a compositional bias: basic and acidic residues. Positions 1013 to 1023 (PAGPPGPPGPP) are enriched in pro residues.

The protein belongs to the fibrillar collagen family. As to quaternary structure, trimers of one alpha 2(I) and two alpha 1(I) chains. Interacts (via C-terminus) with TMEM131 (via PapD-L domain); the interaction is direct and is involved in assembly and TRAPPIII ER-to-Golgi transport complex-dependent secretion of collagen. Prolines at the third position of the tripeptide repeating unit (G-X-Y) are hydroxylated in some or all of the chains. As to expression, expressed in bones.

The protein resides in the secreted. The protein localises to the extracellular space. It is found in the extracellular matrix. Functionally, type I collagen is a member of group I collagen (fibrillar forming collagen). The chain is Collagen alpha-2(I) chain from Paramylodon harlani (Harlan's ground sloth).